We begin with the raw amino-acid sequence, 104 residues long: Replication restart protein PriB (104 aa).

Positions methionine 1 to aspartate 101 constitute an SSB domain.

It belongs to the PriB family. Homodimer. Interacts with PriA and DnaT. Component of the replication restart primosome. Primosome assembly occurs via a 'hand-off' mechanism. PriA binds to replication forks, subsequently PriB then DnaT bind; DnaT then displaces ssDNA to generate the helicase loading substrate.

Functionally, involved in the restart of stalled replication forks, which reloads the replicative helicase on sites other than the origin of replication; the PriA-PriB pathway is the major replication restart pathway. During primosome assembly it facilitates complex formation between PriA and DnaT on DNA; stabilizes PriA on DNA. Stimulates the DNA unwinding activity of PriA helicase. This Shigella dysenteriae serotype 1 (strain Sd197) protein is Replication restart protein PriB.